Here is a 259-residue protein sequence, read N- to C-terminus: Deoxyribose-phosphate aldolase (259 aa).

Catalysis depends on Asp102, which acts as the Proton donor/acceptor. Lys167 functions as the Schiff-base intermediate with acetaldehyde in the catalytic mechanism. Catalysis depends on Lys201, which acts as the Proton donor/acceptor.

It belongs to the DeoC/FbaB aldolase family. DeoC type 2 subfamily.

The protein resides in the cytoplasm. It catalyses the reaction 2-deoxy-D-ribose 5-phosphate = D-glyceraldehyde 3-phosphate + acetaldehyde. Its pathway is carbohydrate degradation; 2-deoxy-D-ribose 1-phosphate degradation; D-glyceraldehyde 3-phosphate and acetaldehyde from 2-deoxy-alpha-D-ribose 1-phosphate: step 2/2. In terms of biological role, catalyzes a reversible aldol reaction between acetaldehyde and D-glyceraldehyde 3-phosphate to generate 2-deoxy-D-ribose 5-phosphate. The polypeptide is Deoxyribose-phosphate aldolase (Edwardsiella ictaluri (strain 93-146)).